Here is a 183-residue protein sequence, read N- to C-terminus: Peptide methionine sulfoxide reductase MsrA 1 (183 aa).

Cysteine 12 is a catalytic residue.

This sequence belongs to the MsrA Met sulfoxide reductase family.

It carries out the reaction L-methionyl-[protein] + [thioredoxin]-disulfide + H2O = L-methionyl-(S)-S-oxide-[protein] + [thioredoxin]-dithiol. The catalysed reaction is [thioredoxin]-disulfide + L-methionine + H2O = L-methionine (S)-S-oxide + [thioredoxin]-dithiol. Functionally, has an important function as a repair enzyme for proteins that have been inactivated by oxidation. Catalyzes the reversible oxidation-reduction of methionine sulfoxide in proteins to methionine. In Lactococcus lactis subsp. lactis (strain IL1403) (Streptococcus lactis), this protein is Peptide methionine sulfoxide reductase MsrA 1 (msrA1).